The following is a 602-amino-acid chain: Multidrug and toxin extrusion protein 2 (602 aa).

The Cytoplasmic segment spans residues 1 to 33 (MDSLQDTVALDHGGCCPALSRLVPRGFGTEMWT). A helical transmembrane segment spans residues 34–54 (LFALSGPLFLFQVLTFMIYIV). Topologically, residues 55–66 (STVFCGHLGKVE) are extracellular. Residues 67–87 (LASVTLAVAFVNVCGVSVGVG) form a helical membrane-spanning segment. The Cytoplasmic segment spans residues 88–119 (LSSACDTLMSQSFGSPNKKHVGVILQRGALVL). Residues 120–140 (LLCCLPCWALFLNTQHILLLF) form a helical membrane-spanning segment. The Extracellular segment spans residues 141–153 (RQDPDVSRLTQDY). The chain crosses the membrane as a helical span at residues 154-174 (VMIFIPGLPVIFLYNLLAKYL). At 175 to 219 (QNQGWLKGQEEESPFQTPGLSILHPSHSHLSRASFHLFQKITWPQ) the chain is on the cytoplasmic side. A helical transmembrane segment spans residues 220–240 (VLSGVVGNCVNGVANYALVSV). Residues 241–248 (LNLGVRGS) lie on the Extracellular side of the membrane. The helical transmembrane segment at 249–269 (AYANIISQFAQTVFLLLYIVL) threads the bilayer. The Cytoplasmic portion of the chain corresponds to 270–289 (KKLHLETWAGWSSQCLQDWG). A helical membrane pass occupies residues 290 to 309 (PFFSLAVPSMLMICVEWWAY). Over 310-327 (EIGSFLMGLLSVVDLSAQ) the chain is Extracellular. Residues 328–348 (AVIYEVATVTYMIPLGLSIGV) form a helical membrane-spanning segment. At 349 to 368 (CVRVGMALGAADTVQAKRSA) the chain is on the cytoplasmic side. The chain crosses the membrane as a helical span at residues 369 to 389 (VSGVLSIVGISLVLGTLISIL). At 390–402 (KNQLGHIFTNDED) the chain is on the extracellular side. Residues 403–423 (VIALVSQVLPVYSVFHVFEAI) form a helical membrane-spanning segment. The Cytoplasmic portion of the chain corresponds to 424 to 442 (CCVYGGVLRGTGKQAFGAA). A helical membrane pass occupies residues 443–463 (VNAITYYIIGLPLGILLTFVV). Residues 464 to 466 (RMR) lie on the Extracellular side of the membrane. A helical transmembrane segment spans residues 467 to 487 (IMGLWLGMLACVFLATAAFVA). Over 488 to 578 (YTARLDWKLA…LSVKQLVIRR (91 aa)) the chain is Cytoplasmic. A disordered region spans residues 503-529 (KHSGRQQQQRAESTATRPGPEKAVLSS). The segment covering 507–518 (RQQQQRAESTAT) has biased composition (polar residues). Residues 579–599 (GAALGAASATLMVGLTVRILA) traverse the membrane as a helical segment. Residues 600–602 (TRH) lie on the Extracellular side of the membrane.

This sequence belongs to the multi antimicrobial extrusion (MATE) (TC 2.A.66.1) family. In terms of tissue distribution, high expression in kidney. Very small expression in adrenal gland and lung. High expression in kidney. Very small expression in brain and testis. As to expression, ubiquitously expressed in all tissues examined except the kidney.

The protein localises to the cell membrane. The protein resides in the apical cell membrane. The enzyme catalyses thiamine(out) + H(+)(in) = thiamine(in) + H(+)(out). It carries out the reaction estrone 3-sulfate(in) + H(+)(out) = estrone 3-sulfate(out) + H(+)(in). It catalyses the reaction creatinine(in) + H(+)(out) = creatinine(out) + H(+)(in). Its function is as follows. Multidrug efflux pump that functions as a H(+)/organic cation antiporter. Mediates the efflux of cationic compounds, such as the model cations, tetraethylammonium (TEA) and 1-methyl-4-phenylpyridinium (MPP+), the platinum-based drug oxaliplatin or weak bases that are positively charged at physiological pH, cimetidine, the platinum-based drugs cisplatin and oxaliplatin or the antidiabetic drug metformin. Mediates the efflux of endogenous compounds such as, creatinine, thiamine and estrone-3-sulfate. Plays a physiological role in the excretion of drugs, toxins and endogenous metabolites through the kidney. Functionally, non-functional protein. The protein is Multidrug and toxin extrusion protein 2 of Homo sapiens (Human).